We begin with the raw amino-acid sequence, 571 residues long: Putative fatty-acid--CoA ligase fadD11 (571 aa).

The segment covering 1–19 has biased composition (low complexity); that stretch reads MARLRGAGAAGRCRPGRFG. 2 disordered regions span residues 1-35 and 67-91; these read MARLRGAGAAGRCRPGRFGSSARRHGLADDGEPDR and RQRGDQGGHLRATVRRSRSRQRCAH. Over residues 78–91 the composition is skewed to basic residues; sequence ATVRRSRSRQRCAH. 2 helical membrane-spanning segments follow: residues 314–334 and 431–451; these read TLAFFAGIGIPIAEIWGMSEL and ANIENTILAACPMVGVMMAIG.

It belongs to the ATP-dependent AMP-binding enzyme family.

Its subcellular location is the cell membrane. The polypeptide is Putative fatty-acid--CoA ligase fadD11 (fadD11) (Mycobacterium tuberculosis (strain CDC 1551 / Oshkosh)).